The sequence spans 243 residues: Ribonuclease 3 (243 aa).

Residues 19–144 (FNTLHKLLGF…LVGAIYLDRG (126 aa)) form the RNase III domain. Position 61 (Glu61) interacts with Mg(2+). Residue Asp65 is part of the active site. Asn130 and Glu133 together coordinate Mg(2+). Residue Glu133 is part of the active site. Positions 172–240 (SYKSLLIEWC…SKRAYYALQN (69 aa)) constitute a DRBM domain.

This sequence belongs to the ribonuclease III family. In terms of assembly, homodimer. It depends on Mg(2+) as a cofactor.

It is found in the cytoplasm. The enzyme catalyses Endonucleolytic cleavage to 5'-phosphomonoester.. Functionally, digests double-stranded RNA. Involved in the processing of primary rRNA transcript to yield the immediate precursors to the large and small rRNAs (23S and 16S). Processes some mRNAs, and tRNAs when they are encoded in the rRNA operon. Processes pre-crRNA and tracrRNA of type II CRISPR loci if present in the organism. The protein is Ribonuclease 3 (rnc) of Zunongwangia profunda (strain DSM 18752 / CCTCC AB 206139 / SM-A87) (Wangia profunda).